Consider the following 343-residue polypeptide: Lumican (343 aa).

The N-terminal stretch at Met-1–Cys-18 is a signal peptide. Gln-19 is subject to Pyrrolidone carboxylic acid. A sulfotyrosine mark is found at Tyr-20 and Tyr-22. An LRRNT domain is found at Asp-31 to Ser-69. 8 LRR repeats span residues Gly-70–Asn-91, Asp-94–Lys-117, Asn-120–Lys-140, Thr-141–Gly-162, Asn-165–Lys-186, Ser-190–Ser-211, Leu-212–Gly-232, and Thr-235–Val-255. The N-linked (GlcNAc...) (keratan sulfate) asparagine glycan is linked to Asn-91. Asn-130 carries an N-linked (GlcNAc...) (keratan sulfate) asparagine glycan. N-linked (GlcNAc...) (keratan sulfate) asparagine glycosylation occurs at Asn-165. An N-linked (GlcNAc...) (keratan sulfate) asparagine glycan is attached at Asn-257. LRR repeat units lie at residues Ser-260–Leu-281, Glu-282–Lys-301, and Lys-310–Met-330. A disulfide bridge connects residues Cys-300 and Cys-333. N-linked (GlcNAc...) asparagine glycosylation occurs at Asn-320.

The protein belongs to the small leucine-rich proteoglycan (SLRP) family. SLRP class II subfamily. As to quaternary structure, binds to laminin. Post-translationally, contains keratan sulfate.

The protein localises to the secreted. Its subcellular location is the extracellular space. It is found in the extracellular matrix. The protein is Lumican (LUM) of Coturnix japonica (Japanese quail).